The primary structure comprises 640 residues: Threonine--tRNA ligase (640 aa).

The region spanning 1–61 is the TGS domain; sequence MVKITYPDNS…MQDSTIKLIT (61 aa). Positions 242-533 are catalytic; that stretch reads DHRKLGPKLN…LIENFAGEFP (292 aa). 3 residues coordinate Zn(2+): Cys-334, His-385, and His-510.

The protein belongs to the class-II aminoacyl-tRNA synthetase family. As to quaternary structure, homodimer. Requires Zn(2+) as cofactor.

The protein localises to the cytoplasm. It catalyses the reaction tRNA(Thr) + L-threonine + ATP = L-threonyl-tRNA(Thr) + AMP + diphosphate + H(+). Catalyzes the attachment of threonine to tRNA(Thr) in a two-step reaction: L-threonine is first activated by ATP to form Thr-AMP and then transferred to the acceptor end of tRNA(Thr). Also edits incorrectly charged L-seryl-tRNA(Thr). This Petrotoga mobilis (strain DSM 10674 / SJ95) protein is Threonine--tRNA ligase.